A 127-amino-acid chain; its full sequence is Ribosome-binding factor A (127 aa).

This sequence belongs to the RbfA family. Monomer. Binds 30S ribosomal subunits, but not 50S ribosomal subunits or 70S ribosomes.

The protein resides in the cytoplasm. Functionally, one of several proteins that assist in the late maturation steps of the functional core of the 30S ribosomal subunit. Associates with free 30S ribosomal subunits (but not with 30S subunits that are part of 70S ribosomes or polysomes). Required for efficient processing of 16S rRNA. May interact with the 5'-terminal helix region of 16S rRNA. The chain is Ribosome-binding factor A from Geobacillus kaustophilus (strain HTA426).